We begin with the raw amino-acid sequence, 341 residues long: Phenylalanine--tRNA ligase alpha subunit (341 aa).

E252 serves as a coordination point for Mg(2+).

The protein belongs to the class-II aminoacyl-tRNA synthetase family. Phe-tRNA synthetase alpha subunit type 1 subfamily. As to quaternary structure, tetramer of two alpha and two beta subunits. It depends on Mg(2+) as a cofactor.

The protein localises to the cytoplasm. It catalyses the reaction tRNA(Phe) + L-phenylalanine + ATP = L-phenylalanyl-tRNA(Phe) + AMP + diphosphate + H(+). In Malacoplasma penetrans (strain HF-2) (Mycoplasma penetrans), this protein is Phenylalanine--tRNA ligase alpha subunit.